Here is a 1163-residue protein sequence, read N- to C-terminus: Zinc finger protein 516 (1163 aa).

A compositionally biased stretch (basic and acidic residues) spans Met1–Arg13. The segment at Met1–Val26 is disordered. The mediates promoter DNA-binding and activation of transcription stretch occupies residues Met1–Ala431. 7 consecutive C2H2-type zinc fingers follow at residues His34 to His56, Tyr62 to His84, Val174 to His197, Phe200 to His223, Phe248 to His270, His276 to His298, and Glu335 to His357. The segment covering Ser460 to Asp469 has biased composition (basic and acidic residues). Disordered stretches follow at residues Ser460–Gly512, His533–His667, and His679–Leu730. Residues Arg496–Ala507 are compositionally biased toward low complexity. Residues Ser515 to His537 form a C2H2-type 8 zinc finger. Residues Arg542–Ala552 show a composition bias toward basic and acidic residues. A compositionally biased stretch (polar residues) spans Glu561–Gly572. Residues Glu588–Ala598 show a composition bias toward acidic residues. A compositionally biased stretch (polar residues) spans Glu615 to Asp625. Residues Gln626 to Glu641 show a composition bias toward basic and acidic residues. Residue Lys643 forms a Glycyl lysine isopeptide (Lys-Gly) (interchain with G-Cter in SUMO2) linkage. Residues Ser656–His667 show a composition bias toward basic and acidic residues. Lys681 participates in a covalent cross-link: Glycyl lysine isopeptide (Lys-Gly) (interchain with G-Cter in SUMO2). Basic and acidic residues predominate over residues Pro706–Gly720. The segment at His760–His783 adopts a C2H2-type 9; atypical zinc-finger fold. The interval Thr838–Ala1007 is disordered. Residues Val840–Val857 show a composition bias toward low complexity. Glycyl lysine isopeptide (Lys-Gly) (interchain with G-Cter in SUMO2) cross-links involve residues Lys1043 and Lys1062. The C2H2-type 10 zinc finger occupies Phe1098–His1120. The segment at Ser1126–Thr1163 is disordered.

The protein belongs to the krueppel C2H2-type zinc-finger protein family. Interacts with PRDM16; the interaction is direct and may play a role in the transcription of brown adipose tissue-specific genes. Interacts with PWWP2B. Interacts with HDAC1; this interaction is enhanced in the presence of PWWP2B.

The protein localises to the nucleus. Functionally, transcriptional regulator that binds to the promoter and activates the transcription of genes promoting brown adipose tissue (BAT) differentiation. Among brown adipose tissue-specific genes, binds the proximal region of the promoter of the UCP1 gene to activate its transcription and thereby regulate thermogenesis. May also play a role in the cellular response to replication stress. This Homo sapiens (Human) protein is Zinc finger protein 516.